Consider the following 511-residue polypeptide: Cytochrome P450 monooxygenase prhD (511 aa).

N7 carries an N-linked (GlcNAc...) asparagine glycan. A helical transmembrane segment spans residues 10 to 30 (GNGMGLLIPLGLSWLIWTILL). C444 contacts heme. An N-linked (GlcNAc...) asparagine glycan is attached at N502.

Belongs to the cytochrome P450 family. Heme is required as a cofactor.

Its subcellular location is the membrane. It participates in secondary metabolite biosynthesis; terpenoid biosynthesis. In terms of biological role, cytochrome P450 monooxygenase; part of the gene cluster that mediates the biosynthesis of paraherquonin, a meroterpenoid with a unique, highly congested hexacyclic molecular architecture. The first step of the pathway is the synthesis of 3,5-dimethylorsellinic acid (DMOA) by the polyketide synthase prhL. Synthesis of DMOA is followed by farnesylation by the prenyltransferase prhE, methylesterification by the methyl-transferase prhM, epoxidation of the prenyl chain by the flavin-dependent monooxygenase prhF, and cyclization of the farnesyl moiety by the terpene cyclase prhH, to yield the tetracyclic intermediate, protoaustinoid A. The short chain dehydrogenase prhI then oxidizes the C-3 alcohol group of the terpene cyclase product to transform protoaustinoid A into protoaustinoid B. The FAD-binding monooxygenase prhJ catalyzes the oxidation of protoaustinoid B into preaustinoid A which is further oxidized into preaustinoid A1 by FAD-binding monooxygenase phrK. Finally, prhA leads to berkeleydione via the berkeleyone B intermediate. PrhA is a multifunctional dioxygenase that first desaturates at C5-C6 to form berkeleyone B, followed by rearrangement of the A/B-ring to form the cycloheptadiene moiety in berkeleydione. Berkeleydione serves as the key intermediate for the biosynthesis of paraherquonin as well as many other meroterpenoids. The cytochrome P450 monooxygenases prhB, prhD, and prhN, as well as the isomerase prhC, are probably involved in the late stage of paraherquonin biosynthesis, after the production of berkeleydione. Especially prhC might be a multifunctional enzyme that catalyzes the D-ring expansion via intramolecular methoxy rearrangement, as well as the hydrolysis of the expanded D-ring. The polypeptide is Cytochrome P450 monooxygenase prhD (Penicillium brasilianum).